The following is a 765-amino-acid chain: Phosphoribosylformylglycinamidine synthase subunit PurL (765 aa).

Over residues 1-13 (MTVSPTSAPTQAI) the composition is skewed to polar residues. A disordered region spans residues 1-32 (MTVSPTSAPTQAIDTVERAATTPDEPQPFGEL). Histidine 65 is an active-site residue. Residues tyrosine 68 and lysine 112 each contribute to the ATP site. Glutamate 114 contributes to the Mg(2+) binding site. Substrate contacts are provided by residues 115 to 118 (SHNH) and arginine 137. Histidine 116 acts as the Proton acceptor in catalysis. Aspartate 138 contacts Mg(2+). Glutamine 263 is a substrate binding site. Aspartate 291 lines the Mg(2+) pocket. 335 to 337 (ESQ) serves as a coordination point for substrate. Asparagine 523 and glycine 560 together coordinate ATP. Position 561 (asparagine 561) interacts with Mg(2+). Substrate is bound at residue serine 563.

This sequence belongs to the FGAMS family. In terms of assembly, monomer. Part of the FGAM synthase complex composed of 1 PurL, 1 PurQ and 2 PurS subunits.

The protein resides in the cytoplasm. It carries out the reaction N(2)-formyl-N(1)-(5-phospho-beta-D-ribosyl)glycinamide + L-glutamine + ATP + H2O = 2-formamido-N(1)-(5-O-phospho-beta-D-ribosyl)acetamidine + L-glutamate + ADP + phosphate + H(+). Its pathway is purine metabolism; IMP biosynthesis via de novo pathway; 5-amino-1-(5-phospho-D-ribosyl)imidazole from N(2)-formyl-N(1)-(5-phospho-D-ribosyl)glycinamide: step 1/2. Its function is as follows. Part of the phosphoribosylformylglycinamidine synthase complex involved in the purines biosynthetic pathway. Catalyzes the ATP-dependent conversion of formylglycinamide ribonucleotide (FGAR) and glutamine to yield formylglycinamidine ribonucleotide (FGAM) and glutamate. The FGAM synthase complex is composed of three subunits. PurQ produces an ammonia molecule by converting glutamine to glutamate. PurL transfers the ammonia molecule to FGAR to form FGAM in an ATP-dependent manner. PurS interacts with PurQ and PurL and is thought to assist in the transfer of the ammonia molecule from PurQ to PurL. This chain is Phosphoribosylformylglycinamidine synthase subunit PurL, found in Mycolicibacterium paratuberculosis (strain ATCC BAA-968 / K-10) (Mycobacterium paratuberculosis).